A 507-amino-acid chain; its full sequence is L-amino-acid oxidase (507 aa).

The N-terminal stretch at 1–19 (MNVLFIFSLLFLAALESCA) is a signal peptide. Cysteines 29 and 192 form a disulfide. Residues 62–63 (MA), 82–83 (EA), Arg-90, and 106–109 (GPMR) contribute to the FAD site. Arg-109 is a substrate binding site. N-linked (GlcNAc...) asparagine glycans are attached at residues Asn-191 and Asn-213. An FAD-binding site is contributed by Val-280. Cys-348 and Cys-429 are joined by a disulfide. The N-linked (GlcNAc...) asparagine glycan is linked to Asn-378. Residue Tyr-389 coordinates substrate. FAD-binding positions include Glu-473 and 480–485 (GWIDST).

This sequence belongs to the flavin monoamine oxidase family. FIG1 subfamily. In terms of assembly, homodimer; non-covalently linked. FAD is required as a cofactor. In terms of tissue distribution, expressed by the venom gland.

It is found in the secreted. The catalysed reaction is an L-alpha-amino acid + O2 + H2O = a 2-oxocarboxylate + H2O2 + NH4(+). It carries out the reaction L-leucine + O2 + H2O = 4-methyl-2-oxopentanoate + H2O2 + NH4(+). Its function is as follows. Catalyzes an oxidative deamination of predominantly hydrophobic and aromatic L-amino acids, thus producing hydrogen peroxide that may contribute to the diverse toxic effects of this enzyme. Shows activity on L-Leu. Exhibits diverse biological activities, such as hemorrhage, hemolysis, edema, apoptosis of vascular endothelial cells or tumor cell lines, antibacterial and antiparasitic activities. This protein induces platelet aggregation by both hydrogen peroxide production and binding to platelet membrane proteins (that would enhance the sensitivity of platelets to hydrogen peroxide). Effects of snake L-amino oxidases on platelets are controversial, since they either induce aggregation or inhibit agonist-induced aggregation. These different effects are probably due to different experimental conditions. This Naja atra (Chinese cobra) protein is L-amino-acid oxidase.